A 460-amino-acid polypeptide reads, in one-letter code: GTPase Der (460 aa).

EngA-type G domains lie at 9–171 and 199–370; these read KTIA…SLNQ and IQVG…ECFS. Residues 15 to 22, 62 to 66, 123 to 126, 205 to 212, 252 to 256, and 316 to 319 contribute to the GTP site; these read GQPNVGKS, DTGGM, NKID, GRVNVGKS, DTAGI, and NKWD. Residues 371-455 enclose the KH-like domain; sequence RRIPTSLLNS…PLILNAKDKK (85 aa).

This sequence belongs to the TRAFAC class TrmE-Era-EngA-EngB-Septin-like GTPase superfamily. EngA (Der) GTPase family. In terms of assembly, associates with the 50S ribosomal subunit.

In terms of biological role, GTPase that plays an essential role in the late steps of ribosome biogenesis. The chain is GTPase Der from Helicobacter pylori (strain G27).